Reading from the N-terminus, the 305-residue chain is MSKKLTFQEIILTLQQYWNDQGCMLMQAYDNEKGAGTMSPYTFLRAIGPEPWNAAYVEPSRRPADGRYGENPNRLYQHHQFQVVMKPSPSNIQELYLASLEKLGINPLEHDIRFVEDNWENPSTGSAGLGWEVWLDGMEITQFTYFQQVGGLATSPVTAEVTYGLERLASYIQEVDSVYDIEWAPGVKYGEIFLQPEYEHSKYSFEMSDQDMLLENFEKFEKEASRALEEGLVHPAYDYVLKCSHTFNLLDARGAVSVTERTGYIARIRNLARVVAKTFVAERKKLGFPLLDEATRAILLAEDDE.

The protein belongs to the class-II aminoacyl-tRNA synthetase family. As to quaternary structure, tetramer of two alpha and two beta subunits.

Its subcellular location is the cytoplasm. The catalysed reaction is tRNA(Gly) + glycine + ATP = glycyl-tRNA(Gly) + AMP + diphosphate. This chain is Glycine--tRNA ligase alpha subunit, found in Streptococcus pyogenes serotype M18 (strain MGAS8232).